The following is a 352-amino-acid chain: Protein CIA1 (352 aa).

WD repeat units follow at residues G18–T64, T72–I111, G116–C155, G161–Q200, G211–G250, Y265–G303, and A315–P352.

This sequence belongs to the WD repeat CIA1 family. In terms of assembly, part of a complex composed of AE7, CIA1, MMS19 and NAR1. Interacts with AE7 and NAR1.

It is found in the nucleus. The protein resides in the cytoplasm. In terms of biological role, essential component of the cytosolic iron-sulfur (Fe-S) protein assembly (CIA) machinery. Required for the maturation of extramitochondrial Fe/S proteins. The protein is Protein CIA1 of Arabidopsis thaliana (Mouse-ear cress).